The chain runs to 160 residues: Inner membrane protein YcdZ (160 aa).

5 consecutive transmembrane segments (helical) span residues 20–42 (WGAV…YFAC), 50–70 (LLIS…IIHG), 72–92 (ALAP…AFLM), 99–119 (LLLS…AGQG), and 123–143 (LVLP…NSGL).

To E.coli YahC.

The protein resides in the cell inner membrane. The sequence is that of Inner membrane protein YcdZ (ycdZ) from Salmonella typhimurium (strain LT2 / SGSC1412 / ATCC 700720).